A 306-amino-acid chain; its full sequence is Aspartate carbamoyltransferase catalytic subunit (306 aa).

Residues R56 and T57 each contribute to the carbamoyl phosphate site. Position 84 (K84) interacts with L-aspartate. Carbamoyl phosphate-binding residues include R106, H136, and Q139. 2 residues coordinate L-aspartate: R169 and R221. Residues A262 and P263 each coordinate carbamoyl phosphate.

Belongs to the aspartate/ornithine carbamoyltransferase superfamily. ATCase family. In terms of assembly, heterododecamer (2C3:3R2) of six catalytic PyrB chains organized as two trimers (C3), and six regulatory PyrI chains organized as three dimers (R2).

The enzyme catalyses carbamoyl phosphate + L-aspartate = N-carbamoyl-L-aspartate + phosphate + H(+). It functions in the pathway pyrimidine metabolism; UMP biosynthesis via de novo pathway; (S)-dihydroorotate from bicarbonate: step 2/3. In terms of biological role, catalyzes the condensation of carbamoyl phosphate and aspartate to form carbamoyl aspartate and inorganic phosphate, the committed step in the de novo pyrimidine nucleotide biosynthesis pathway. This is Aspartate carbamoyltransferase catalytic subunit from Streptococcus gordonii (strain Challis / ATCC 35105 / BCRC 15272 / CH1 / DL1 / V288).